The chain runs to 167 residues: MASNDDAPVGAANGNGNTGAQPSLNVLAQYVKDLSFESPGAPNSLRGRDKAPGIAINVNVNANPLSDKQFDVNLTLNAKASFDQEVLFNVELVYGGVFAISGFPQEHMLPILFIECPRLLFPFARQIIAEATRNGGFPPLMLDPIDFAQMFQQKIAEDQAASKVKVS.

A disordered region spans residues 1–20; the sequence is MASNDDAPVGAANGNGNTGA.

The protein belongs to the SecB family. In terms of assembly, homotetramer, a dimer of dimers. One homotetramer interacts with 1 SecA dimer.

It localises to the cytoplasm. Functionally, one of the proteins required for the normal export of preproteins out of the cell cytoplasm. It is a molecular chaperone that binds to a subset of precursor proteins, maintaining them in a translocation-competent state. It also specifically binds to its receptor SecA. The polypeptide is Protein-export protein SecB (Mesorhizobium japonicum (strain LMG 29417 / CECT 9101 / MAFF 303099) (Mesorhizobium loti (strain MAFF 303099))).